The sequence spans 325 residues: HPr kinase/phosphorylase (325 aa).

Catalysis depends on residues His-152 and Lys-173. 167–174 (GESGLGKS) is an ATP binding site. Mg(2+) is bound at residue Ser-174. Asp-191 serves as the catalytic Proton acceptor; for phosphorylation activity. Proton donor; for dephosphorylation activity. Positions 215–224 (LEVRGIGLLD) are important for the catalytic mechanism of both phosphorylation and dephosphorylation. Glu-216 is a binding site for Mg(2+). Residue Arg-258 is part of the active site. Residues 279 to 284 (AVDAGR) form an important for the catalytic mechanism of dephosphorylation region.

Belongs to the HPrK/P family. Homohexamer. The cofactor is Mg(2+).

The catalysed reaction is [HPr protein]-L-serine + ATP = [HPr protein]-O-phospho-L-serine + ADP + H(+). It carries out the reaction [HPr protein]-O-phospho-L-serine + phosphate + H(+) = [HPr protein]-L-serine + diphosphate. Catalyzes the ATP- as well as the pyrophosphate-dependent phosphorylation of a specific serine residue in HPr, a phosphocarrier protein of the phosphoenolpyruvate-dependent sugar phosphotransferase system (PTS). HprK/P also catalyzes the pyrophosphate-producing, inorganic phosphate-dependent dephosphorylation (phosphorolysis) of seryl-phosphorylated HPr (P-Ser-HPr). This chain is HPr kinase/phosphorylase, found in Leptothrix cholodnii (strain ATCC 51168 / LMG 8142 / SP-6) (Leptothrix discophora (strain SP-6)).